We begin with the raw amino-acid sequence, 535 residues long: Glucose-6-phosphate isomerase (535 aa).

The Proton donor role is filled by glutamate 347. Residues histidine 378 and lysine 493 contribute to the active site.

This sequence belongs to the GPI family.

It localises to the cytoplasm. The catalysed reaction is alpha-D-glucose 6-phosphate = beta-D-fructose 6-phosphate. It functions in the pathway carbohydrate biosynthesis; gluconeogenesis. The protein operates within carbohydrate degradation; glycolysis; D-glyceraldehyde 3-phosphate and glycerone phosphate from D-glucose: step 2/4. In terms of biological role, catalyzes the reversible isomerization of glucose-6-phosphate to fructose-6-phosphate. This Chlamydia felis (strain Fe/C-56) (Chlamydophila felis) protein is Glucose-6-phosphate isomerase.